We begin with the raw amino-acid sequence, 337 residues long: 5-dehydro-2-deoxygluconokinase (337 aa).

The protein belongs to the carbohydrate kinase PfkB family.

It carries out the reaction 5-dehydro-2-deoxy-D-gluconate + ATP = 6-phospho-5-dehydro-2-deoxy-D-gluconate + ADP + H(+). It functions in the pathway polyol metabolism; myo-inositol degradation into acetyl-CoA; acetyl-CoA from myo-inositol: step 5/7. Catalyzes the phosphorylation of 5-dehydro-2-deoxy-D-gluconate (2-deoxy-5-keto-D-gluconate or DKG) to 6-phospho-5-dehydro-2-deoxy-D-gluconate (DKGP). This Geobacillus thermodenitrificans (strain NG80-2) protein is 5-dehydro-2-deoxygluconokinase.